A 494-amino-acid chain; its full sequence is Aspartyl/glutamyl-tRNA(Asn/Gln) amidotransferase subunit B (494 aa).

It belongs to the GatB/GatE family. GatB subfamily. Heterotrimer of A, B and C subunits.

The catalysed reaction is L-glutamyl-tRNA(Gln) + L-glutamine + ATP + H2O = L-glutaminyl-tRNA(Gln) + L-glutamate + ADP + phosphate + H(+). It carries out the reaction L-aspartyl-tRNA(Asn) + L-glutamine + ATP + H2O = L-asparaginyl-tRNA(Asn) + L-glutamate + ADP + phosphate + 2 H(+). In terms of biological role, allows the formation of correctly charged Asn-tRNA(Asn) or Gln-tRNA(Gln) through the transamidation of misacylated Asp-tRNA(Asn) or Glu-tRNA(Gln) in organisms which lack either or both of asparaginyl-tRNA or glutaminyl-tRNA synthetases. The reaction takes place in the presence of glutamine and ATP through an activated phospho-Asp-tRNA(Asn) or phospho-Glu-tRNA(Gln). In Nitrobacter hamburgensis (strain DSM 10229 / NCIMB 13809 / X14), this protein is Aspartyl/glutamyl-tRNA(Asn/Gln) amidotransferase subunit B.